Here is an 84-residue protein sequence, read N- to C-terminus: Small ribosomal subunit protein bS18 (84 aa).

It belongs to the bacterial ribosomal protein bS18 family. As to quaternary structure, part of the 30S ribosomal subunit. Forms a tight heterodimer with protein bS6.

Functionally, binds as a heterodimer with protein bS6 to the central domain of the 16S rRNA, where it helps stabilize the platform of the 30S subunit. In Mycobacterium sp. (strain JLS), this protein is Small ribosomal subunit protein bS18.